The following is a 169-amino-acid chain: Peptide methionine sulfoxide reductase MsrA (169 aa).

C13 is an active-site residue.

This sequence belongs to the MsrA Met sulfoxide reductase family.

The catalysed reaction is L-methionyl-[protein] + [thioredoxin]-disulfide + H2O = L-methionyl-(S)-S-oxide-[protein] + [thioredoxin]-dithiol. It carries out the reaction [thioredoxin]-disulfide + L-methionine + H2O = L-methionine (S)-S-oxide + [thioredoxin]-dithiol. Functionally, has an important function as a repair enzyme for proteins that have been inactivated by oxidation. Catalyzes the reversible oxidation-reduction of methionine sulfoxide in proteins to methionine. In Mycolicibacterium gilvum (strain PYR-GCK) (Mycobacterium gilvum (strain PYR-GCK)), this protein is Peptide methionine sulfoxide reductase MsrA.